Here is a 208-residue protein sequence, read N- to C-terminus: Thymidylate kinase (208 aa).

10–17 is an ATP binding site; the sequence is GLEGAGKS.

Belongs to the thymidylate kinase family.

The catalysed reaction is dTMP + ATP = dTDP + ADP. Functionally, phosphorylation of dTMP to form dTDP in both de novo and salvage pathways of dTTP synthesis. The protein is Thymidylate kinase of Pseudoalteromonas translucida (strain TAC 125).